Here is a 361-residue protein sequence, read N- to C-terminus: Membrane-bound lytic murein transglycosylase B (361 aa).

The signal sequence occupies residues 1–18 (MFKRRYVTLLPLFVLLAA). Residue Cys19 is the site of N-palmitoyl cysteine attachment. Cys19 is lipidated: S-diacylglycerol cysteine. Glu162 is an active-site residue.

As to quaternary structure, monomer.

It is found in the cell outer membrane. It catalyses the reaction Exolytic cleavage of the (1-&gt;4)-beta-glycosidic linkage between N-acetylmuramic acid (MurNAc) and N-acetylglucosamine (GlcNAc) residues in peptidoglycan, from either the reducing or the non-reducing ends of the peptidoglycan chains, with concomitant formation of a 1,6-anhydrobond in the MurNAc residue.. Its function is as follows. Murein-degrading enzyme. Catalyzes the cleavage of the glycosidic bonds between N-acetylmuramic acid and N-acetylglucosamine residues in peptidoglycan. May play a role in recycling of muropeptides during cell elongation and/or cell division. This Escherichia coli (strain K12) protein is Membrane-bound lytic murein transglycosylase B (mltB).